The chain runs to 4306 residues: Cytoplasmic dynein 2 heavy chain 1 (4306 aa).

A stem region spans residues 1 to 1650; that stretch reads MAGSLSDVRK…YVQMVDSELQ (1650 aa). 145–152 lines the ATP pocket; it reads LGVVLRKS. Residues 669–696 adopt a coiled-coil conformation; it reads KELEGYIQKLQNAAERLATENRRLRKWH. AAA regions lie at residues 1651–1875, 1941–2161, 2249–2505, and 2617–2862; these read YTYE…VLRG, SALK…KQND, LTAD…WVLG, and HYGR…ESCK. ATP is bound by residues 1689–1696, 1979–1986, 2291–2298, and 2655–2662; these read GPAGTGKT, GPSGAGKS, GPEGCGKG, and GRSGVGRR. The stalk stretch occupies residues 2880-3168; it reads AISSSKRKEL…AEVSKAQETI (289 aa). Coiled-coil stretches lie at residues 2896-2981, 3108-3199, and 3407-3441; these read LQAG…KEVQ, LETE…LATL, and IQHEKPDLEEQKTKLLQQEEDKKIQLARLEESLLE. AAA stretches follow at residues 3243 to 3472 and 3689 to 3904; these read LCTE…LIQD and MALF…VIDR.

Belongs to the dynein heavy chain family. The cytoplasmic dynein complex 2 is probably composed by a heavy chain DYNC2H1 homodimer and a number of DYNC2LI1 light intermediate chains. Widely expressed both in ciliated and unciliated tissues. Detected in brain and testis (at protein level).

It localises to the cytoplasm. Its subcellular location is the cytoskeleton. It is found in the cilium axoneme. The protein localises to the cell membrane. In terms of biological role, may function as a motor for intraflagellar retrograde transport. Functions in cilia biogenesis. May play a role in transport between endoplasmic reticulum and Golgi or organization of the Golgi in cells. This is Cytoplasmic dynein 2 heavy chain 1 (Dync2h1) from Rattus norvegicus (Rat).